A 1312-amino-acid polypeptide reads, in one-letter code: Beta-N-acetylhexosaminidase (1312 aa).

The N-terminal stretch at 1 to 33 is a signal peptide; it reads MKHEKQQRFSIRKYAVGAASVLIGFAFQAQTVA. Residues 38–59 are compositionally biased toward polar residues; the sequence is TPTTTENQPTIHTVSDSPQSSE. The segment at 38–178 is disordered; the sequence is TPTTTENQPT…ATEAGKERAA (141 aa). A compositionally biased stretch (basic and acidic residues) spans 118 to 177; sequence AEKETANKKAEEASPKKEEAKEVDSKESNTDKTDKDKPAKKDEAKAEADKPATEAGKERA. Catalytic domain regions lie at residues 176–616 and 621–1046; these read RAAT…TPEA and EAKR…PAVT. G5 domains follow at residues 1059–1138 and 1150–1230; these read NVET…GAPV and TTEV…GTMV. Residues 1244 to 1290 form a disordered region; sequence EEKPKLEIPSQPAPSTAPAEESKVLPQDPAPVVTEKKLPETGTHDSA. A compositionally biased stretch (basic and acidic residues) spans 1277–1286; that stretch reads TEKKLPETGT. An LPXTG sorting signal motif is present at residues 1281–1285; sequence LPETG. Position 1284 is a pentaglycyl murein peptidoglycan amidated threonine (Thr1284). A propeptide spans 1285–1312 (removed by sortase); the sequence is GTHDSAGLVVAGLMSTLAAYGLTKRKED.

It belongs to the glycosyl hydrolase 20 family.

The protein resides in the secreted. The protein localises to the cell wall. It carries out the reaction Hydrolysis of terminal non-reducing N-acetyl-D-hexosamine residues in N-acetyl-beta-D-hexosaminides.. The protein is Beta-N-acetylhexosaminidase (strH) of Streptococcus pneumoniae serotype 4 (strain ATCC BAA-334 / TIGR4).